Here is a 293-residue protein sequence, read N- to C-terminus: Elongation factor Ts (293 aa).

The tract at residues 80-83 (TDFV) is involved in Mg(2+) ion dislocation from EF-Tu.

It belongs to the EF-Ts family.

It is found in the cytoplasm. Functionally, associates with the EF-Tu.GDP complex and induces the exchange of GDP to GTP. It remains bound to the aminoacyl-tRNA.EF-Tu.GTP complex up to the GTP hydrolysis stage on the ribosome. This Burkholderia multivorans (strain ATCC 17616 / 249) protein is Elongation factor Ts.